Here is a 666-residue protein sequence, read N- to C-terminus: Probable potassium transport system protein Kup (666 aa).

A run of 12 helical transmembrane segments spans residues 16–36 (GFII…LYTM), 58–78 (ISLI…LIAL), 100–120 (PWLI…GALT), 141–161 (IYQN…VLFG), 165–185 (FGTG…FSFL), 221–241 (IFIL…YSDL), 253–273 (WPFV…WILA), 294–314 (VYLV…LISG), 343–363 (LYIP…VLYF), 373–393 (YGLA…YYLI), 399–419 (PFLA…FFWA), and 424–444 (FMHG…VMFI).

It belongs to the HAK/KUP transporter (TC 2.A.72) family.

The protein resides in the cell membrane. The enzyme catalyses K(+)(in) + H(+)(in) = K(+)(out) + H(+)(out). Functionally, transport of potassium into the cell. Likely operates as a K(+):H(+) symporter. The chain is Probable potassium transport system protein Kup from Streptococcus pyogenes serotype M6 (strain ATCC BAA-946 / MGAS10394).